The chain runs to 315 residues: CID domain-containing protein 1 (315 aa).

In terms of domain architecture, CID spans 1 to 135 (MADFTEQTLR…RLHEVHQQVK (135 aa)). Residues 227–273 (MLEEYVKRLKNETNERETLESNLNMLIENVRMSIEHHEKLCREVKRR) are a coiled coil.

This chain is CID domain-containing protein 1 (cids-1), found in Caenorhabditis elegans.